Here is a 212-residue protein sequence, read N- to C-terminus: Ependymin (212 aa).

An N-terminal signal peptide occupies residues 1–20 (MRLTGLLCVALWSASAVVLA). Asn-69, Asn-92, and Asn-112 each carry an N-linked (GlcNAc...) asparagine glycan.

It belongs to the ependymin family. Forms disulfide-linked dimers. Post-translationally, binds calcium through the terminal sialic acids. In terms of tissue distribution, EPDs are synthesized in the meninx and secreted in the cerebrospinal fluid.

It is found in the secreted. Functionally, may play a role in neural plasticity. May be involved during axon regeneration. The polypeptide is Ependymin (epd) (Clupea harengus (Atlantic herring)).